Consider the following 133-residue polypeptide: ATP synthase epsilon chain, chloroplastic (133 aa).

Belongs to the ATPase epsilon chain family. As to quaternary structure, F-type ATPases have 2 components, CF(1) - the catalytic core - and CF(0) - the membrane proton channel. CF(1) has five subunits: alpha(3), beta(3), gamma(1), delta(1), epsilon(1). CF(0) has three main subunits: a, b and c.

It is found in the plastid. Its subcellular location is the chloroplast thylakoid membrane. Its function is as follows. Produces ATP from ADP in the presence of a proton gradient across the membrane. The chain is ATP synthase epsilon chain, chloroplastic from Atropa belladonna (Belladonna).